Here is a 411-residue protein sequence, read N- to C-terminus: Translation initiation factor 2 subunit gamma (411 aa).

The tr-type G domain occupies 9–203 (QAEVNIGMVG…AIEDFIPTPK (195 aa)). Residues 18–25 (GHVDHGKT) are G1. Mg(2+) is bound by residues D21, T25, G46, and T48. 21–26 (DHGKTT) lines the GTP pocket. The interval 46-50 (GITIK) is G2. C61, C64, C73, and C76 together coordinate Zn(2+). The segment at 90–93 (DAPG) is G3. GTP-binding positions include 146-149 (NKIE) and 181-183 (SAL). Residues 146-149 (NKIE) are G4. The segment at 181-183 (SAL) is G5.

This sequence belongs to the TRAFAC class translation factor GTPase superfamily. Classic translation factor GTPase family. EIF2G subfamily. As to quaternary structure, heterotrimer composed of an alpha, a beta and a gamma chain. Requires Mg(2+) as cofactor.

The catalysed reaction is GTP + H2O = GDP + phosphate + H(+). Functionally, eIF-2 functions in the early steps of protein synthesis by forming a ternary complex with GTP and initiator tRNA. The polypeptide is Translation initiation factor 2 subunit gamma (Pyrococcus abyssi (strain GE5 / Orsay)).